A 257-amino-acid chain; its full sequence is DNA repair protein RecO (257 aa).

It belongs to the RecO family.

In terms of biological role, involved in DNA repair and RecF pathway recombination. The chain is DNA repair protein RecO from Streptococcus thermophilus (strain ATCC BAA-491 / LMD-9).